Here is a 511-residue protein sequence, read N- to C-terminus: 2,3-bisphosphoglycerate-independent phosphoglycerate mutase (511 aa).

Residues D12 and S62 each contribute to the Mn(2+) site. S62 functions as the Phosphoserine intermediate in the catalytic mechanism. Substrate is bound by residues H123, 154-155 (RD), R181, R187, 252-255 (RPDR), and K335. Mn(2+) is bound by residues D402, H406, D444, H445, and H462.

This sequence belongs to the BPG-independent phosphoglycerate mutase family. Monomer. Requires Mn(2+) as cofactor.

It catalyses the reaction (2R)-2-phosphoglycerate = (2R)-3-phosphoglycerate. The protein operates within carbohydrate degradation; glycolysis; pyruvate from D-glyceraldehyde 3-phosphate: step 3/5. Functionally, catalyzes the interconversion of 2-phosphoglycerate and 3-phosphoglycerate. This Acholeplasma laidlawii (strain PG-8A) protein is 2,3-bisphosphoglycerate-independent phosphoglycerate mutase.